The sequence spans 317 residues: MALTELRIASRRSQLAMVQTNWVKAELEKAHPGLKITVEAMATQGDKILDVALAKIGDKGLFTKELEAQMLVDRADIAVHSLKDLPTNLPEGLMLGCITEREDPADALVVNAKNQAYKLETLPEGSVVGTSSLRRLAQLRHHYPHLIFKDVRGNVITRLEKLDSGDYDCLILAAAGLGRLGFSDRIHQLIPGEISLHAVGQGALGIECVEGKPEVLEAIKVLEHTPTSQRCLAERAFLRELEGGCQVPIGVNTRFEGDQLILTGMVASLDGKRLIRDQTSGEASEAEAIGIALANTLKGQGAGEILKEIFETVRPEA.

An S-(dipyrrolylmethanemethyl)cysteine modification is found at Cys245.

The protein belongs to the HMBS family. In terms of assembly, monomer. The cofactor is dipyrromethane.

It catalyses the reaction 4 porphobilinogen + H2O = hydroxymethylbilane + 4 NH4(+). It functions in the pathway porphyrin-containing compound metabolism; protoporphyrin-IX biosynthesis; coproporphyrinogen-III from 5-aminolevulinate: step 2/4. Its pathway is porphyrin-containing compound metabolism; chlorophyll biosynthesis. Tetrapolymerization of the monopyrrole PBG into the hydroxymethylbilane pre-uroporphyrinogen in several discrete steps. The chain is Porphobilinogen deaminase from Synechococcus sp. (strain CC9605).